The following is a 238-amino-acid chain: Accessory gene regulator protein A (238 aa).

Positions 2–125 (KIFVCEDDQR…LKMRIIDCLE (124 aa)) constitute a Response regulatory domain. A 4-aspartylphosphate modification is found at Asp-59. The HTH LytTR-type domain maps to 143 to 238 (IELKRGSNSV…FASVRNVKKI (96 aa)).

Its subcellular location is the cytoplasm. Required for high-level post-exponential phase expression of a series of secreted proteins. In Staphylococcus epidermidis (strain ATCC 35984 / DSM 28319 / BCRC 17069 / CCUG 31568 / BM 3577 / RP62A), this protein is Accessory gene regulator protein A (agrA).